An 88-amino-acid chain; its full sequence is UPF0250 protein PM1928 (88 aa).

It belongs to the UPF0250 family.

The sequence is that of UPF0250 protein PM1928 from Pasteurella multocida (strain Pm70).